The following is a 326-amino-acid chain: Nine-heme cytochrome c (326 aa).

A signal peptide spans 1-30 (MRNGTSLLLLAAIALAGAACLTAMGGTAKA). His67, His70, Cys77, Cys80, His81, His82, Cys89, Cys92, His93, His111, Cys127, Cys130, His131, Cys141, Cys144, His145, Cys157, Cys160, His161, His227, His230, His248, Cys255, Cys258, His259, His260, Cys271, Cys274, His275, His294, Cys297, Cys300, His301, Cys314, Cys317, and His318 together coordinate heme.

As to quaternary structure, monomer. In terms of processing, binds 9 heme groups per subunit.

It localises to the periplasm. In terms of biological role, may form part of a transmembrane redox complex through which electrons are transferred to the cytoplasm for reduction of sulfate. The protein is Nine-heme cytochrome c of Desulfovibrio desulfuricans (strain ATCC 27774 / DSM 6949 / MB).